The sequence spans 287 residues: Nucleotide-binding protein Ppro_0977 (287 aa).

8 to 15 (GMSGSGKS) contributes to the ATP binding site. 59 to 62 (DIRG) is a GTP binding site.

The protein belongs to the RapZ-like family.

Displays ATPase and GTPase activities. The polypeptide is Nucleotide-binding protein Ppro_0977 (Pelobacter propionicus (strain DSM 2379 / NBRC 103807 / OttBd1)).